The following is a 106-amino-acid chain: U1-lycotoxin-Ls1b (106 aa).

A signal peptide spans 1 to 19 (MKVLVVVALLVTLISYSSS). Positions 20–40 (EGIDDPEADELLSLMANEQTR) are excised as a propeptide. 4 cysteine pairs are disulfide-bonded: Cys-43-Cys-58, Cys-50-Cys-67, Cys-57-Cys-85, and Cys-69-Cys-83.

This sequence belongs to the neurotoxin 19 (CSTX) family. 04 (U1-Lctx) subfamily. As to expression, expressed by the venom gland.

Its subcellular location is the secreted. This Lycosa singoriensis (Wolf spider) protein is U1-lycotoxin-Ls1b.